The sequence spans 150 residues: Putative biopolymer transport protein ExbB-like 2 (150 aa).

The next 3 membrane-spanning stretches (helical) occupy residues 5–25 (VDYG…AIAI), 63–83 (APYI…MDLG), and 97–117 (LALA…AIVI).

This sequence belongs to the ExbB/TolQ family.

The protein resides in the cell inner membrane. This Helicobacter pylori (strain ATCC 700392 / 26695) (Campylobacter pylori) protein is Putative biopolymer transport protein ExbB-like 2.